The sequence spans 353 residues: Photosystem II protein D1 (353 aa).

Threonine 2 is subject to N-acetylthreonine. Position 2 is a phosphothreonine (threonine 2). 3 consecutive transmembrane segments (helical) span residues 29-46 (YIGWFGVLMIPTLLTATS), 118-133 (HFLLGVACYMGREWEL), and 142-156 (WIAVAYSAPVAAATA). Histidine 118 lines the chlorophyll a pocket. Residue tyrosine 126 coordinates pheophytin a. 2 residues coordinate [CaMn4O5] cluster: aspartate 170 and glutamate 189. The helical transmembrane segment at 197 to 218 (FHMLGVAGVFGGSLFSAMHGSL) threads the bilayer. Histidine 198 contacts chlorophyll a. Residues histidine 215 and 264–265 (SF) each bind a quinone. Histidine 215 is a Fe cation binding site. Histidine 272 contributes to the Fe cation binding site. Residues 274 to 288 (FLAAWPVVGIWFTAL) form a helical membrane-spanning segment. [CaMn4O5] cluster-binding residues include histidine 332, glutamate 333, aspartate 342, and alanine 344. A propeptide spanning residues 345–353 (ALEVPSLNG) is cleaved from the precursor.

The protein belongs to the reaction center PufL/M/PsbA/D family. In terms of assembly, PSII is composed of 1 copy each of membrane proteins PsbA, PsbB, PsbC, PsbD, PsbE, PsbF, PsbH, PsbI, PsbJ, PsbK, PsbL, PsbM, PsbT, PsbX, PsbY, PsbZ, Psb30/Ycf12, at least 3 peripheral proteins of the oxygen-evolving complex and a large number of cofactors. It forms dimeric complexes. The D1/D2 heterodimer binds P680, chlorophylls that are the primary electron donor of PSII, and subsequent electron acceptors. It shares a non-heme iron and each subunit binds pheophytin, quinone, additional chlorophylls, carotenoids and lipids. D1 provides most of the ligands for the Mn4-Ca-O5 cluster of the oxygen-evolving complex (OEC). There is also a Cl(-1) ion associated with D1 and D2, which is required for oxygen evolution. The PSII complex binds additional chlorophylls, carotenoids and specific lipids. is required as a cofactor. In terms of processing, tyr-161 forms a radical intermediate that is referred to as redox-active TyrZ, YZ or Y-Z. C-terminally processed by CTPA; processing is essential to allow assembly of the oxygen-evolving complex and thus photosynthetic growth.

It localises to the plastid. It is found in the chloroplast thylakoid membrane. It catalyses the reaction 2 a plastoquinone + 4 hnu + 2 H2O = 2 a plastoquinol + O2. In terms of biological role, photosystem II (PSII) is a light-driven water:plastoquinone oxidoreductase that uses light energy to abstract electrons from H(2)O, generating O(2) and a proton gradient subsequently used for ATP formation. It consists of a core antenna complex that captures photons, and an electron transfer chain that converts photonic excitation into a charge separation. The D1/D2 (PsbA/PsbD) reaction center heterodimer binds P680, the primary electron donor of PSII as well as several subsequent electron acceptors. The polypeptide is Photosystem II protein D1 (Oryza nivara (Indian wild rice)).